The sequence spans 577 residues: Arginine--tRNA ligase (577 aa).

The 'HIGH' region motif lies at 122–132 (PNVAKEMHVGH).

Belongs to the class-I aminoacyl-tRNA synthetase family. Monomer.

The protein resides in the cytoplasm. It catalyses the reaction tRNA(Arg) + L-arginine + ATP = L-arginyl-tRNA(Arg) + AMP + diphosphate. The protein is Arginine--tRNA ligase of Shigella flexneri.